A 307-amino-acid polypeptide reads, in one-letter code: NAD(+) hydrolase TcpC (307 aa).

Residues 22 to 42 (YNILFFIFLSIAIPFLLFLAW) traverse the membrane as a helical segment. The TIR domain maps to 169 to 303 (THYDFFISHA…EIARELAEIA (135 aa)). NAD(+)-binding positions include 178-179 (AK) and E208. E244 is a catalytic residue.

As to quaternary structure, interacts with host MYD88. Interacts with host TLR4.

It is found in the secreted. The protein localises to the membrane. It carries out the reaction NAD(+) + H2O = ADP-D-ribose + nicotinamide + H(+). It catalyses the reaction NADP(+) + H2O = ADP-D-ribose 2'-phosphate + nicotinamide + H(+). Virulence factor that suppresses host Toll-like receptor (TLR)-mediated cytokine production upon infection, thereby increasing bacterial burden in the urinary tract and promoting renal tissue damage. Acts as a NAD(+) hydrolase (NADase) by catalyzing cleavage of NAD(+) into ADP-D-ribose (ADPR) and nicotinamide. Also able to hydrolyze NADP(+), but not other NAD(+)-related molecules. This Escherichia coli O6:H1 (strain CFT073 / ATCC 700928 / UPEC) protein is NAD(+) hydrolase TcpC.